We begin with the raw amino-acid sequence, 294 residues long: tRNA dimethylallyltransferase (294 aa).

11–18 is a binding site for ATP; it reads GPTAVGKT. 13-18 contributes to the substrate binding site; that stretch reads TAVGKT. Positions 36–39 are interaction with substrate tRNA; the sequence is DSQQ.

This sequence belongs to the IPP transferase family. As to quaternary structure, monomer. The cofactor is Mg(2+).

It carries out the reaction adenosine(37) in tRNA + dimethylallyl diphosphate = N(6)-dimethylallyladenosine(37) in tRNA + diphosphate. Catalyzes the transfer of a dimethylallyl group onto the adenine at position 37 in tRNAs that read codons beginning with uridine, leading to the formation of N6-(dimethylallyl)adenosine (i(6)A). The polypeptide is tRNA dimethylallyltransferase (Lactococcus lactis subsp. cremoris (strain SK11)).